Reading from the N-terminus, the 342-residue chain is Central glycolytic genes regulator (342 aa).

Residues 37–56 (RRNLAVSLGLTERVLRSEVT) constitute a DNA-binding region (H-T-H motif).

The protein belongs to the SorC transcriptional regulatory family. Homotetramer.

Functionally, in the absence of glucose, represses the transcription of the gapA operon, which encodes five key glycolytic enzymes. The sequence is that of Central glycolytic genes regulator (cggR) from Priestia megaterium (strain DSM 319 / IMG 1521) (Bacillus megaterium).